The chain runs to 92 residues: Cell division protein FtsB (92 aa).

At 1-3 the chain is on the cytoplasmic side; the sequence is MKW. Residues 4-21 form a helical membrane-spanning segment; the sequence is VTVVLSFALVCCQYSLWF. The Periplasmic portion of the chain corresponds to 22-92; that stretch reads GKGSIGRNSS…TFYRLIRHNR (71 aa). The stretch at 28 to 50 forms a coiled coil; the sequence is RNSSLREQIAVQEEKNQTLALRN.

Belongs to the FtsB family. As to quaternary structure, part of a complex composed of FtsB, FtsL and FtsQ.

The protein resides in the cell inner membrane. Functionally, essential cell division protein. May link together the upstream cell division proteins, which are predominantly cytoplasmic, with the downstream cell division proteins, which are predominantly periplasmic. This Neisseria meningitidis serogroup C (strain 053442) protein is Cell division protein FtsB.